Reading from the N-terminus, the 338-residue chain is Flap endonuclease 1 (338 aa).

Residues 1-98 (MGVNLSSILI…ETLRERSLIK (98 aa)) form an N-domain region. Mg(2+) is bound by residues D27, D80, E152, E154, D173, D175, and D236. The I-domain stretch occupies residues 116-257 (KIRSLSSRIN…TALSLIKKYN (142 aa)). The segment at 330–338 (HQSSLDRFF) is interaction with PCNA.

Belongs to the XPG/RAD2 endonuclease family. FEN1 subfamily. As to quaternary structure, interacts with PCNA. PCNA stimulates the nuclease activity without altering cleavage specificity. Mg(2+) serves as cofactor.

In terms of biological role, structure-specific nuclease with 5'-flap endonuclease and 5'-3' exonuclease activities involved in DNA replication and repair. During DNA replication, cleaves the 5'-overhanging flap structure that is generated by displacement synthesis when DNA polymerase encounters the 5'-end of a downstream Okazaki fragment. Binds the unpaired 3'-DNA end and kinks the DNA to facilitate 5' cleavage specificity. Cleaves one nucleotide into the double-stranded DNA from the junction in flap DNA, leaving a nick for ligation. Also involved in the base excision repair (BER) pathway. Acts as a genome stabilization factor that prevents flaps from equilibrating into structures that lead to duplications and deletions. Also possesses 5'-3' exonuclease activity on nicked or gapped double-stranded DNA. The polypeptide is Flap endonuclease 1 (Picrophilus torridus (strain ATCC 700027 / DSM 9790 / JCM 10055 / NBRC 100828 / KAW 2/3)).